A 123-amino-acid polypeptide reads, in one-letter code: MRIALNLAAYFPVLMFLLVGTGLGVALVSIGKILGPNRPDTEKNAPYECGFEAFEDARMKFDVRYYLVAILFIIFDLETAFLFPWGVALRDIGWPGFISMMIFLLEFLLGFAYIWKKGGLDWE.

The next 3 helical transmembrane spans lie at 11-31, 67-87, and 92-112; these read FPVL…VSIG, LVAI…PWGV, and IGWP…LGFA.

This sequence belongs to the complex I subunit 3 family. NDH-1 is composed of 14 different subunits. Subunits NuoA, H, J, K, L, M, N constitute the membrane sector of the complex.

The protein localises to the cell inner membrane. It catalyses the reaction a quinone + NADH + 5 H(+)(in) = a quinol + NAD(+) + 4 H(+)(out). Its function is as follows. NDH-1 shuttles electrons from NADH, via FMN and iron-sulfur (Fe-S) centers, to quinones in the respiratory chain. The immediate electron acceptor for the enzyme in this species is believed to be ubiquinone. Couples the redox reaction to proton translocation (for every two electrons transferred, four hydrogen ions are translocated across the cytoplasmic membrane), and thus conserves the redox energy in a proton gradient. This chain is NADH-quinone oxidoreductase subunit A, found in Paraburkholderia phymatum (strain DSM 17167 / CIP 108236 / LMG 21445 / STM815) (Burkholderia phymatum).